A 609-amino-acid chain; its full sequence is Neutral protease (609 aa).

Positions Met1 to Ala24 are cleaved as a signal peptide. Positions Ala25 to His196 are excised as a propeptide. Residue His343 participates in Zn(2+) binding. The active site involves Glu344. Zn(2+) is bound by residues His347 and Glu367. His426 acts as the Proton donor in catalysis.

This sequence belongs to the peptidase M4 family. The cofactor is Zn(2+).

Its subcellular location is the secreted. The enzyme catalyses Preferential cleavage of bonds with bulky hydrophobic groups in P2 and P1'. Phe at P1' is the most favored residue, which distinguished this enzyme from thermolysin.. Extracellular zinc metalloprotease. The chain is Neutral protease (nprV) from Vibrio proteolyticus (Aeromonas proteolytica).